The sequence spans 426 residues: MYVLKNGQVLNESGELENKDVLIQNGKVNLIADSIEVTSGEEFDATGKLIAPGFIDVHVHLREPGGEHKETILTGTKAAARGGYTTICSMPNTKPVPDSKEVMNSLQAKIKETAEVRVLPYASITTSLGTDELVDFEALKEAGAFAFTDDGVGVQLAGTMYEAMKRAAALDMAIVAHCEDNSLIYGGVVHDGIFAEKEGLKGIPNIAESVQIARDVLLAEAAGCHYHVCHISTKESVRVVRDAKRAGIRVTAEVSPHHLILDEEDIPGNDGNWKMNPPLRSKEDRAALLEGLLDGTIDFIATDHAPHAAEEKNVPMEQAAFGIVGLETAFPLLYTHFVKTNEWTLKQLIDWMTVKPAECFKLPYGKLEEGAVADIVVLDLEKEATIDPATFYSKGKNTPFVGETCIGWPVATFAEGELVYNEGENK.

Zn(2+) is bound by residues His58 and His60. Residues 60–62 (HLR) and Asn92 each bind substrate. Positions 150, 177, and 230 each coordinate Zn(2+). Asn276 contacts substrate. A Zn(2+)-binding site is contributed by Asp303. Asp303 is a catalytic residue. Residues His307 and 321-322 (FG) each bind substrate.

Belongs to the metallo-dependent hydrolases superfamily. DHOase family. Class I DHOase subfamily. The cofactor is Zn(2+).

It catalyses the reaction (S)-dihydroorotate + H2O = N-carbamoyl-L-aspartate + H(+). It functions in the pathway pyrimidine metabolism; UMP biosynthesis via de novo pathway; (S)-dihydroorotate from bicarbonate: step 3/3. Catalyzes the reversible cyclization of carbamoyl aspartate to dihydroorotate. This Listeria innocua serovar 6a (strain ATCC BAA-680 / CLIP 11262) protein is Dihydroorotase.